Here is a 338-residue protein sequence, read N- to C-terminus: Phenylalanine--tRNA ligase alpha subunit (338 aa).

Residue E252 coordinates Mg(2+).

It belongs to the class-II aminoacyl-tRNA synthetase family. Phe-tRNA synthetase alpha subunit type 1 subfamily. Tetramer of two alpha and two beta subunits. Mg(2+) serves as cofactor.

Its subcellular location is the cytoplasm. The enzyme catalyses tRNA(Phe) + L-phenylalanine + ATP = L-phenylalanyl-tRNA(Phe) + AMP + diphosphate + H(+). This Aquifex aeolicus (strain VF5) protein is Phenylalanine--tRNA ligase alpha subunit (pheS).